The chain runs to 214 residues: Ras-related protein RABA2b (214 aa).

GTP is bound at residue Gly19–Ser26. Positions Ser41–Phe49 match the Effector region motif. GTP is bound by residues Asp67–Gln71, Asn125–Asp128, and Ser155–Ala156. S-geranylgeranyl cysteine attachment occurs at residues Cys211 and Cys212.

It belongs to the small GTPase superfamily. Rab family. In terms of tissue distribution, expressed in root tips.

The protein localises to the endosome membrane. It localises to the golgi apparatus. The protein resides in the trans-Golgi network membrane. Functionally, intracellular vesicle trafficking and protein transport. The protein is Ras-related protein RABA2b (RABA2B) of Arabidopsis thaliana (Mouse-ear cress).